A 145-amino-acid polypeptide reads, in one-letter code: 3-hydroxyacyl-[acyl-carrier-protein] dehydratase FabZ (145 aa).

His49 is an active-site residue.

The protein belongs to the thioester dehydratase family. FabZ subfamily.

It localises to the cytoplasm. The catalysed reaction is a (3R)-hydroxyacyl-[ACP] = a (2E)-enoyl-[ACP] + H2O. Its function is as follows. Involved in unsaturated fatty acids biosynthesis. Catalyzes the dehydration of short chain beta-hydroxyacyl-ACPs and long chain saturated and unsaturated beta-hydroxyacyl-ACPs. The sequence is that of 3-hydroxyacyl-[acyl-carrier-protein] dehydratase FabZ from Rickettsia bellii (strain OSU 85-389).